The sequence spans 152 residues: Ribosomal RNA large subunit methyltransferase H (152 aa).

Residues Leu68, Gly100, and 119–124 (FGRMTW) contribute to the S-adenosyl-L-methionine site.

It belongs to the RNA methyltransferase RlmH family. Homodimer.

It localises to the cytoplasm. The enzyme catalyses pseudouridine(1915) in 23S rRNA + S-adenosyl-L-methionine = N(3)-methylpseudouridine(1915) in 23S rRNA + S-adenosyl-L-homocysteine + H(+). Specifically methylates the pseudouridine at position 1915 (m3Psi1915) in 23S rRNA. The chain is Ribosomal RNA large subunit methyltransferase H from Paramagnetospirillum magneticum (strain ATCC 700264 / AMB-1) (Magnetospirillum magneticum).